Reading from the N-terminus, the 172-residue chain is uncharacterized protein (172 aa).

This is an uncharacterized protein from Agrobacterium tumefaciens (strain Ach5).